The primary structure comprises 206 residues: MARYTGATCRLCRREGMKLFLKGDRCFTDKCAFVRRSYAPGQHGANKKKVSNYGVQLREKQKARRIYGILEGQFRTYYEKAEHIKGITGENLLKLLEMRLDNIVYRLGYGSSRNEARQLVTHGHFLVNGKKVDICSYHVSVNDVITVCEKSRSSEKFKTFVENPKTLPKWLEANVDNYEGKVVAEPSREDIDVPVNETLIVELYSK.

One can recognise an S4 RNA-binding domain in the interval 98-163; it reads MRLDNIVYRL…SEKFKTFVEN (66 aa).

The protein belongs to the universal ribosomal protein uS4 family. Part of the 30S ribosomal subunit. Contacts protein S5. The interaction surface between S4 and S5 is involved in control of translational fidelity.

One of the primary rRNA binding proteins, it binds directly to 16S rRNA where it nucleates assembly of the body of the 30S subunit. Its function is as follows. With S5 and S12 plays an important role in translational accuracy. This Clostridium beijerinckii (strain ATCC 51743 / NCIMB 8052) (Clostridium acetobutylicum) protein is Small ribosomal subunit protein uS4.